Consider the following 155-residue polypeptide: Ribonuclease H (155 aa).

The RNase H type-1 domain occupies 1-142; that stretch reads MLKQVEIFTD…CDELARAAAM (142 aa). Mg(2+) contacts are provided by Asp10, Glu48, Asp70, and Asp134.

The protein belongs to the RNase H family. Monomer. Mg(2+) is required as a cofactor.

Its subcellular location is the cytoplasm. It catalyses the reaction Endonucleolytic cleavage to 5'-phosphomonoester.. Functionally, endonuclease that specifically degrades the RNA of RNA-DNA hybrids. In Escherichia fergusonii (strain ATCC 35469 / DSM 13698 / CCUG 18766 / IAM 14443 / JCM 21226 / LMG 7866 / NBRC 102419 / NCTC 12128 / CDC 0568-73), this protein is Ribonuclease H.